The primary structure comprises 240 residues: Zinc finger CCCH domain-containing protein 52 (240 aa).

Disordered regions lie at residues 1 to 37 (MDAR…GLGS) and 81 to 106 (SQVS…PGSG). The C3H1-type 1 zinc-finger motif lies at 36-64 (GSKSKPCTKFFSTSGCPFGDNCHFLHYVP). Residues 89-104 (GSGGPGGRFSGRGDPG) are compositionally biased toward gly residues. Residues 113 to 177 (ASTSKISVDA…EQINVASGMV (65 aa)) form the KH domain. The segment at 205 to 232 (NYKTKICDRYSKGNCTYGDRCHFAHGES) adopts a C3H1-type 2 zinc-finger fold.

The sequence is that of Zinc finger CCCH domain-containing protein 52 from Arabidopsis thaliana (Mouse-ear cress).